We begin with the raw amino-acid sequence, 290 residues long: Protein SSO1 (290 aa).

At 1-265 (MSYNNPYQLE…ARKARKNKIR (265 aa)) the chain is on the cytoplasmic side. One can recognise a t-SNARE coiled-coil homology domain in the interval 190–252 (LAEVQARHQE…EQGVGHTDKA (63 aa)). The helical; Anchor for type IV membrane protein transmembrane segment at 266-287 (CWLIVFAIIVVVVVVVVVPAVV) threads the bilayer. Residues 288-290 (KTR) lie on the Extracellular side of the membrane.

It belongs to the syntaxin family.

Its subcellular location is the membrane. In terms of biological role, required for vesicle fusion with the plasma membrane. The protein is Protein SSO1 (SSO1) of Saccharomyces cerevisiae (strain ATCC 204508 / S288c) (Baker's yeast).